An 85-amino-acid polypeptide reads, in one-letter code: CDC42 small effector protein homolog (85 aa).

Residues Cys14 and Cys15 are each lipidated (S-palmitoyl cysteine). One can recognise a CRIB domain in the interval 37–50; the sequence is IGNPTNFVHTGHIG. Phosphoserine occurs at positions 78 and 81.

Belongs to the CDC42SE/SPEC family.

The protein localises to the cytoplasm. It localises to the cytoskeleton. Its subcellular location is the cell membrane. Probably involved in the organization of the actin cytoskeleton by acting downstream of CDC42, inducing actin filament assembly. The chain is CDC42 small effector protein homolog (Spec2) from Drosophila melanogaster (Fruit fly).